The primary structure comprises 334 residues: Stabilizer of axonemal microtubules 3 (334 aa).

Disordered regions lie at residues 81 to 105, 128 to 153, and 233 to 260; these read AYVP…PTRT, YQSS…YFGP, and QVWS…RVPR. Polar residues predominate over residues 128–141; sequence YQSSETRAQYTGSP. The segment covering 240-251 has biased composition (pro residues); the sequence is QRPPCPRSSRPP.

The sequence is that of Stabilizer of axonemal microtubules 3 from Homo sapiens (Human).